Reading from the N-terminus, the 198-residue chain is Probable GTP-binding protein EngB (198 aa).

An EngB-type G domain is found at 27-198; that stretch reads DLPEVALAGR…ESWDTILSEL (172 aa). GTP-binding positions include 35-42, 62-66, 80-83, 147-150, and 179-181; these read GRSNVGKS, GKTQL, DVPG, TKAD, and FSS. Residues Ser-42 and Thr-64 each coordinate Mg(2+).

It belongs to the TRAFAC class TrmE-Era-EngA-EngB-Septin-like GTPase superfamily. EngB GTPase family. Mg(2+) serves as cofactor.

In terms of biological role, necessary for normal cell division and for the maintenance of normal septation. The polypeptide is Probable GTP-binding protein EngB (Streptococcus agalactiae serotype III (strain NEM316)).